Reading from the N-terminus, the 422-residue chain is Regulator of sigma-W protease RasP (422 aa).

4 helical membrane passes run 6 to 26 (VIAF…GHLL), 175 to 195 (IAAG…MLGL), 346 to 366 (IVNL…VNLL), and 394 to 414 (EAFV…VVTW). A Zn(2+)-binding site is contributed by H20. The active site involves E21. A Zn(2+)-binding site is contributed by H24. Residues 186 to 271 (AYVILVMLGL…TLHISVTPEA (86 aa)) enclose the PDZ domain.

It belongs to the peptidase M50B family. It depends on Zn(2+) as a cofactor.

The protein resides in the cell membrane. Its function is as follows. Is responsible for site-2 cleavage of the RsiW anti-sigma factor. This results, after a third proteolytic step catalyzed by the ClpXP protease, in the release of SigW and the transcription activation of the genes under the control of the sigma-W factor. Can also cleave liberated signal peptides of PenP and Mpr, probably within in the cell membrane. The sequence is that of Regulator of sigma-W protease RasP from Bacillus subtilis (strain 168).